The chain runs to 389 residues: Cuticlin-3 (389 aa).

The signal sequence occupies residues 1–19; the sequence is MARYSLGLGLCLLVASVSA. Topologically, residues 20–354 are extracellular; sequence IPVDNNVEGE…ELCISSFHIS (335 aa). The 246-residue stretch at 33-278 folds into the ZP domain; sequence ECGPTSITVN…PTCSEPQGFG (246 aa). Asparagine 284 carries an N-linked (GlcNAc...) asparagine glycan. Residues 355-375 form a helical membrane-spanning segment; the sequence is VVTVFLGLTVFVAIFITYMIV. At 376–389 the chain is on the cytoplasmic side; it reads SRMMVPSDKMQSAC.

The protein resides in the cell membrane. Its function is as follows. Plays a role in alae formation in L1 larvae. This chain is Cuticlin-3, found in Caenorhabditis elegans.